Here is a 247-residue protein sequence, read N- to C-terminus: 2,3-bisphosphoglycerate-dependent phosphoglycerate mutase (247 aa).

Substrate-binding positions include arginine 8 to asparagine 15, threonine 21 to glycine 22, arginine 60, glutamate 87 to tyrosine 90, lysine 98, arginine 114 to arginine 115, and glycine 183 to asparagine 184. Histidine 9 serves as the catalytic Tele-phosphohistidine intermediate. Glutamate 87 acts as the Proton donor/acceptor in catalysis.

Belongs to the phosphoglycerate mutase family. BPG-dependent PGAM subfamily. In terms of assembly, homodimer.

It carries out the reaction (2R)-2-phosphoglycerate = (2R)-3-phosphoglycerate. It participates in carbohydrate degradation; glycolysis; pyruvate from D-glyceraldehyde 3-phosphate: step 3/5. Catalyzes the interconversion of 2-phosphoglycerate and 3-phosphoglycerate. The sequence is that of 2,3-bisphosphoglycerate-dependent phosphoglycerate mutase from Acidovorax sp. (strain JS42).